Consider the following 321-residue polypeptide: Methyltransferase cfoB (321 aa).

Belongs to the methyltransferase superfamily.

Its pathway is secondary metabolite biosynthesis; flavonoid biosynthesis. Its function is as follows. Methyltransferase; part of the gene cluster that mediates the biosynthesis of chlorflavonin, a fungal flavonoid with acetolactate synthase inhibitory activity. Within the pathway, cfoB is responsible for the methylation at position C7-OH of flavonoid. The pathway begins with the PKS-NRPS hybrid synthetase cfoA that uses benzoic acid or p-hydroxybenzoic acid as a starter unit with four rounds of chain elongation using malonyl-CoA to form the chalcone skeleton. Then, a new type of chalcone isomerase, cfoK, catalyzes the conversion of the chalcone into a flavanone by a histidine-mediated oxa-Michael addition mechanism. The desaturation of flavanone to flavone is catalyzed by a new type of flavone synthase, the flavin mononucleotide (FMN)-dependent oxidoreductase cfoJ. Monooxygenases cfoF, cfoG, and P450 cfoH are responsible for the hydroxylation of the flavonoid skeleton at sites C3, C8, and C2', respectively. Like cfoF, the dehydratase cfoI also plays a role in the hydroxylation of position C3. Methyltransferases cfoB, cfoC, and cfoD then catalyze the methylation of C7-OH, C8-OH, and C3-OH, respectively. Finally, the monooxygenase cfoE is responsible for the chlorination of flavonoid at position C3'. This is Methyltransferase cfoB from Aspergillus candidus.